The chain runs to 405 residues: MKILIINTGSSSLKFAIYQYENSKKIISGIVEKIKSQKSIIKIVNTDGSTTERFEKGIENHQKAIEKMFKILTNSDLKILKTLSEIKIIGHRVVHGGSSLKNSVILNNSILNKLKQISELAPLHNPNAITAIEAVLKILPHAKQVLCFDTSWHQTIKEHAFLYAIPYSWYKNHNIRKYGFHGLSYSYITKRSSEILNKKIDSLNLIILHLGNGASINAVKNGKSYDTSMGITPLEGLAMGTRSGDIDPSIINLMSTILNKTTKQIEEILNKESGILGISEKSNDMRDIWNKIEEGEYQSKLAVEIMTYRIKKYIGSYIAALDFNVDAIVFTGGIGVTDYGIRALALKGFEKIGIELDLEKNEMAQSKYLESEISTINSKLKILAIPTNEESTILEDIYNLIPKNL.

Asparagine 7 lines the Mg(2+) pocket. Lysine 14 contributes to the ATP binding site. Residue arginine 92 coordinates substrate. Aspartate 149 acts as the Proton donor/acceptor in catalysis. ATP contacts are provided by residues 209 to 213 (HLGNG) and 284 to 286 (DMR). Mg(2+) is bound at residue glutamate 389.

Belongs to the acetokinase family. As to quaternary structure, homodimer. It depends on Mg(2+) as a cofactor. Requires Mn(2+) as cofactor.

Its subcellular location is the cytoplasm. The catalysed reaction is acetate + ATP = acetyl phosphate + ADP. It participates in metabolic intermediate biosynthesis; acetyl-CoA biosynthesis; acetyl-CoA from acetate: step 1/2. In terms of biological role, catalyzes the formation of acetyl phosphate from acetate and ATP. Can also catalyze the reverse reaction. This is Acetate kinase from Borreliella burgdorferi (strain ZS7) (Borrelia burgdorferi).